The following is a 300-amino-acid chain: Polyamine aminopropyltransferase (300 aa).

Positions 4–237 (WHWHIEWQTP…GLWGFVYASD (234 aa)) constitute a PABS domain. Q33 contacts S-methyl-5'-thioadenosine. Residues H64 and E88 each coordinate spermidine. S-methyl-5'-thioadenosine is bound by residues D108 and 140-141 (DG). D158 serves as the catalytic Proton acceptor. P167 contacts S-methyl-5'-thioadenosine.

Belongs to the spermidine/spermine synthase family. As to quaternary structure, homodimer or homotetramer.

Its subcellular location is the cytoplasm. The enzyme catalyses S-adenosyl 3-(methylsulfanyl)propylamine + putrescine = S-methyl-5'-thioadenosine + spermidine + H(+). It functions in the pathway amine and polyamine biosynthesis; spermidine biosynthesis; spermidine from putrescine: step 1/1. Its function is as follows. Catalyzes the irreversible transfer of a propylamine group from the amino donor S-adenosylmethioninamine (decarboxy-AdoMet) to putrescine (1,4-diaminobutane) to yield spermidine. This chain is Polyamine aminopropyltransferase, found in Sulfurisphaera tokodaii (strain DSM 16993 / JCM 10545 / NBRC 100140 / 7) (Sulfolobus tokodaii).